The chain runs to 131 residues: UPF0102 protein YraN (131 aa).

Polar residues predominate over residues 1–19 (MATVPTRSGSPRQLTTKQT). Positions 1–21 (MATVPTRSGSPRQLTTKQTGD) are disordered.

The protein belongs to the UPF0102 family.

This Escherichia coli (strain K12 / MC4100 / BW2952) protein is UPF0102 protein YraN.